A 617-amino-acid polypeptide reads, in one-letter code: Glutamine--fructose-6-phosphate aminotransferase [isomerizing] (617 aa).

C2 serves as the catalytic Nucleophile; for GATase activity. In terms of domain architecture, Glutamine amidotransferase type-2 spans 2–222; it reads CGIIGLAFAE…DGEFGWISPE (221 aa). SIS domains follow at residues 293-432 and 466-607; these read AAGL…EAGR and AASL…PDKP. K612 functions as the For Fru-6P isomerization activity in the catalytic mechanism.

Homodimer.

It is found in the cytoplasm. It catalyses the reaction D-fructose 6-phosphate + L-glutamine = D-glucosamine 6-phosphate + L-glutamate. Catalyzes the first step in hexosamine metabolism, converting fructose-6P into glucosamine-6P using glutamine as a nitrogen source. In Aeropyrum pernix (strain ATCC 700893 / DSM 11879 / JCM 9820 / NBRC 100138 / K1), this protein is Glutamine--fructose-6-phosphate aminotransferase [isomerizing].